A 434-amino-acid polypeptide reads, in one-letter code: Trigger factor (434 aa).

In terms of domain architecture, PPIase FKBP-type spans 160–245 (GDKVKMNFVG…LTEVQAANLP (86 aa)).

The protein belongs to the FKBP-type PPIase family. Tig subfamily.

Its subcellular location is the cytoplasm. It catalyses the reaction [protein]-peptidylproline (omega=180) = [protein]-peptidylproline (omega=0). Involved in protein export. Acts as a chaperone by maintaining the newly synthesized protein in an open conformation. Functions as a peptidyl-prolyl cis-trans isomerase. This chain is Trigger factor, found in Shewanella sp. (strain W3-18-1).